A 427-amino-acid polypeptide reads, in one-letter code: MRNKIFSSLYFQVLLAITLGVFLGHVYPDLGADMKPLGDGFVKLIKMIIAPVIFCTVVTGIAGMESMKAVGKTGAIALLYFEVVSTIALVIGLCVVNLLQPGVGMNVDPATLDASAISAYAEQAKSQGIIAFLLDVIPGSVIGAFASGNILQVLLFAVLFGFSLHHIGEKGKLIFNVIDSFSQVIFGIINMIMRLAPVGAFGAMAFTIGKYGIGSLVQLGQLIACFYVTCLLFIFMVLGSIARANGFSILRFISYIKEELLIVLGTSSSESVLPRMLVKMEALGCKKSVVGLVIPTGYSFNLDGTSIYLTMAAIFIAQATNTPLDLFQQITLLVVLLISSKGAAGVTGSGFIVLAATISAVGHLPLAGLALILGIDRFMSEARALTNLIGNGVATVVVARYCDQLDEQQMNEVLANPAAVQKVDQHG.

9 consecutive transmembrane segments (helical) span residues 5–25 (IFSSLYFQVLLAITLGVFLGH), 44–64 (LIKMIIAPVIFCTVVTGIAGM), 76–96 (IALLYFEVVSTIALVIGLCVV), 142–162 (IGAFASGNILQVLLFAVLFGF), 184–206 (VIFGIINMIMRLAPVGAFGAMAF), 222–242 (LIACFYVTCLLFIFMVLGSIA), 307–327 (IYLTMAAIFIAQATNTPLDLF), 330–350 (ITLLVVLLISSKGAAGVTGSG), and 352–372 (IVLAATISAVGHLPLAGLALI).

This sequence belongs to the dicarboxylate/amino acid:cation symporter (DAACS) (TC 2.A.23) family.

The protein localises to the cell inner membrane. Responsible for the transport of dicarboxylates such as succinate, fumarate, and malate from the periplasm across the membrane. This Aeromonas salmonicida (strain A449) protein is C4-dicarboxylate transport protein.